Reading from the N-terminus, the 753-residue chain is Polyribonucleotide nucleotidyltransferase (753 aa).

Mg(2+) contacts are provided by Asp-488 and Asp-494. The region spanning 555–614 is the KH domain; sequence PKLYTMKINPEKIRDVIGKGGSTIRALTEETGTQIDIGEDGTITIASSDAAKADEAKRRI. Residues 624–692 enclose the S1 motif domain; it reads GKIYEGPVTK…EKGRVKLSLK (69 aa). Residues 692–753 are disordered; the sequence is KALTERPAGM…EGEQQQQQQQ (62 aa). The span at 699 to 739 shows a compositional bias: basic and acidic residues; that stretch reads AGMERSDRPAPAEREFRQPREPRQQREFREPREPREPRDGG.

It belongs to the polyribonucleotide nucleotidyltransferase family. Requires Mg(2+) as cofactor.

Its subcellular location is the cytoplasm. The catalysed reaction is RNA(n+1) + phosphate = RNA(n) + a ribonucleoside 5'-diphosphate. In terms of biological role, involved in mRNA degradation. Catalyzes the phosphorolysis of single-stranded polyribonucleotides processively in the 3'- to 5'-direction. The chain is Polyribonucleotide nucleotidyltransferase from Delftia acidovorans (strain DSM 14801 / SPH-1).